The primary structure comprises 97 residues: Acylphosphatase (97 aa).

Positions 9–95 (TRHLRIHGLV…CDAQGFEQRE (87 aa)) constitute an Acylphosphatase-like domain. Active-site residues include Arg-24 and Asn-42.

Belongs to the acylphosphatase family.

It carries out the reaction an acyl phosphate + H2O = a carboxylate + phosphate + H(+). The chain is Acylphosphatase (acyP) from Acidovorax sp. (strain JS42).